Reading from the N-terminus, the 102-residue chain is Putative septation protein SpoVG (102 aa).

The tract at residues 83–102 (TDEVIPDKNATSDNEESDEA) is disordered.

It belongs to the SpoVG family.

Its function is as follows. Could be involved in septation. The protein is Putative septation protein SpoVG of Staphylococcus epidermidis (strain ATCC 35984 / DSM 28319 / BCRC 17069 / CCUG 31568 / BM 3577 / RP62A).